The sequence spans 432 residues: Trigger factor (432 aa).

The PPIase FKBP-type domain occupies 161–246 (EDRVTIDFTG…LKKVEERELP (86 aa)).

It belongs to the FKBP-type PPIase family. Tig subfamily. In terms of assembly, homodimer and monomer. In vivo most of the ribosomes are in complex with monomeric TF. Uncomplexed TF, however, is in a monomer-dimer equilibrium with approximately two thirds of TF existing in a dimeric state.

The protein localises to the cytoplasm. It carries out the reaction [protein]-peptidylproline (omega=180) = [protein]-peptidylproline (omega=0). Involved in protein export. Acts as a chaperone by maintaining the newly synthesized protein in an open conformation. Functions as a peptidyl-prolyl cis-trans isomerase. This Escherichia coli O6:K15:H31 (strain 536 / UPEC) protein is Trigger factor.